The sequence spans 103 residues: Large ribosomal subunit protein bL21 (103 aa).

Belongs to the bacterial ribosomal protein bL21 family. In terms of assembly, part of the 50S ribosomal subunit. Contacts protein L20.

In terms of biological role, this protein binds to 23S rRNA in the presence of protein L20. This is Large ribosomal subunit protein bL21 from Clostridium acetobutylicum (strain ATCC 824 / DSM 792 / JCM 1419 / IAM 19013 / LMG 5710 / NBRC 13948 / NRRL B-527 / VKM B-1787 / 2291 / W).